A 786-amino-acid polypeptide reads, in one-letter code: Toll-like receptor 1 (786 aa).

An N-terminal signal peptide occupies residues 1–24; the sequence is MTSIFHFAIIFMLILQIRIQLSEE. The Extracellular portion of the chain corresponds to 25 to 580; it reads SEFLVDRSKN…HMSELSCNIT (556 aa). Asparagine 51 is a glycosylation site (N-linked (GlcNAc...) asparagine). LRR repeat units follow at residues 54-77, 78-101, 102-125, 126-150, 151-175, 176-199, 200-223, 224-250, 251-278, 279-308, 309-337, 338-361, 362-388, 389-414, 415-437, 438-457, 458-478, 479-500, and 501-524; these read QNYI…LIIS, HNRI…LDLS, HNKL…SFNA, FDAL…STTH, LEKS…GETY, GEKE…FPTN, KEFH…NIKC, VLED…SNLT, LNNI…YFSI, SNVK…HQVV, SDVF…SGTR, MVHM…NLLT, DTVF…KELS, KIAE…SYDE, KKGD…ILTD, TIFR…SNKI, KSIP…VAFN, SLTD…IDHN, and SVSH…AGDN. A disulfide bridge links cysteine 110 with cysteine 132. Asparagine 137 and asparagine 163 each carry an N-linked (GlcNAc...) asparagine glycan. Cysteine 223 and cysteine 230 are disulfide-bonded. The segment at 313-316 is interaction with bacterial lipopeptide; it reads GFPQ. Asparagine 330 is a glycosylation site (N-linked (GlcNAc...) asparagine). Residues cysteine 343 and cysteine 368 are joined by a disulfide bond. Cysteine 419 and cysteine 442 are oxidised to a cystine. Asparagine 429 is a glycosylation site (N-linked (GlcNAc...) asparagine). Positions 525 to 579 constitute an LRRCT domain; it reads PFQCTCELGEFVKNIDQVSSEVLEGWPDSYKCDYPESYRGTLLKDFHMSELSCNI. N-linked (GlcNAc...) asparagine glycosylation occurs at asparagine 578. The chain crosses the membrane as a helical span at residues 581–601; it reads LLIVTIVATMLVLAVTVTSLC. At 602 to 786 the chain is on the cytoplasmic side; it reads SYLDLPWYLR…NIKLTEQAKK (185 aa). One can recognise a TIR domain in the interval 635–776; it reads LQFHAFISYS…LFWANLRAAI (142 aa).

The protein belongs to the Toll-like receptor family. In terms of assembly, interacts (via extracellular domain) with TLR2. TLR2 seems to exist in heterodimers with either TLR1 or TLR6 before stimulation by the ligand. The heterodimers form bigger oligomers in response to their corresponding ligands as well as further heterotypic associations with other receptors such as CD14 and/or CD36. The activation cluster TLR2:TLR1:CD14 forms in response to triacylated lipopeptides. Binds MYD88 (via TIR domain). Interacts with CNPY3. Interacts with neutrophil recruitment protein from Aedes aegypti saliva; the interaction probably promotes activation of canonical NF-kappa-B signaling in skin-resident macrophages and subsequent expression of neutrophil chemoattractants. Ubiquitous. Highly expressed in spleen, ovary, peripheral blood leukocytes, thymus and small intestine.

The protein localises to the cell membrane. It localises to the cytoplasmic vesicle. Its subcellular location is the phagosome membrane. The protein resides in the membrane raft. It is found in the golgi apparatus. Functionally, participates in the innate immune response to microbial agents. Specifically recognizes diacylated and triacylated lipopeptides. Cooperates with TLR2 to mediate the innate immune response to bacterial lipoproteins or lipopeptides. Forms the activation cluster TLR2:TLR1:CD14 in response to triacylated lipopeptides, this cluster triggers signaling from the cell surface and subsequently is targeted to the Golgi in a lipid-raft dependent pathway. Acts via MYD88 and TRAF6, leading to NF-kappa-B activation, cytokine secretion and the inflammatory response. The protein is Toll-like receptor 1 (TLR1) of Homo sapiens (Human).